Here is a 589-residue protein sequence, read N- to C-terminus: NADPH-dependent diflavin oxidoreductase 1 (589 aa).

The region spanning Ile5–Ile151 is the Flavodoxin-like domain. Residues Ser11–Ala16, Ser60–Gly63, Val98–Asn107, and Glu133 each bind FMN. The region spanning Asp202 to Lys439 is the FAD-binding FR-type domain. FAD contacts are provided by residues Arg349, Arg380–Ser383, and Gly412–Thr415. Residues Thr452 and Ser507 to Arg508 contribute to the NADP(+) site. Trp589 is an FAD binding site.

The protein belongs to the NADPH-dependent diflavin oxidoreductase NDOR1 family. In the N-terminal section; belongs to the flavodoxin family. It in the C-terminal section; belongs to the flavoprotein pyridine nucleotide cytochrome reductase family. In terms of assembly, interacts with DRE2; as part of the cytosolic iron-sulfur (Fe-S) protein assembly (CIA) machinery. Requires FAD as cofactor. FMN is required as a cofactor.

Its subcellular location is the cytoplasm. The protein localises to the mitochondrion. It carries out the reaction 2 oxidized [2Fe-2S]-[protein] + NADPH = 2 reduced [2Fe-2S]-[protein] + NADP(+) + H(+). In terms of biological role, NADPH-dependent reductase which is a central component of the cytosolic iron-sulfur (Fe-S) protein assembly (CIA) machinery. Transfers electrons from NADPH via its FAD and FMN prosthetic groups to the [2Fe-2S] cluster of DRE2, another key component of the CIA machinery. In turn, this reduced cluster provides electrons for assembly of cytosolic iron-sulfur cluster proteins. Positively controls H(2)O(2)-induced cell death. The chain is NADPH-dependent diflavin oxidoreductase 1 from Candida albicans (strain SC5314 / ATCC MYA-2876) (Yeast).